The following is a 124-amino-acid chain: Small ribosomal subunit protein uS12 (124 aa).

The segment at 1–28 (MPTISQLIGSERKRLTRKTKSPALKSCP) is disordered. 3-methylthioaspartic acid is present on Asp89. The disordered stretch occupies residues 104–124 (TAGVKDRRQSRSKYGAKAPKD).

It belongs to the universal ribosomal protein uS12 family. Part of the 30S ribosomal subunit. Contacts proteins S8 and S17. May interact with IF1 in the 30S initiation complex.

With S4 and S5 plays an important role in translational accuracy. Its function is as follows. Interacts with and stabilizes bases of the 16S rRNA that are involved in tRNA selection in the A site and with the mRNA backbone. Located at the interface of the 30S and 50S subunits, it traverses the body of the 30S subunit contacting proteins on the other side and probably holding the rRNA structure together. The combined cluster of proteins S8, S12 and S17 appears to hold together the shoulder and platform of the 30S subunit. This Prochlorococcus marinus (strain MIT 9312) protein is Small ribosomal subunit protein uS12.